Here is a 166-residue protein sequence, read N- to C-terminus: Large ribosomal subunit protein uL10 (166 aa).

Belongs to the universal ribosomal protein uL10 family. Part of the ribosomal stalk of the 50S ribosomal subunit. The N-terminus interacts with L11 and the large rRNA to form the base of the stalk. The C-terminus forms an elongated spine to which L12 dimers bind in a sequential fashion forming a multimeric L10(L12)X complex.

Functionally, forms part of the ribosomal stalk, playing a central role in the interaction of the ribosome with GTP-bound translation factors. This Mesoplasma florum (strain ATCC 33453 / NBRC 100688 / NCTC 11704 / L1) (Acholeplasma florum) protein is Large ribosomal subunit protein uL10.